We begin with the raw amino-acid sequence, 117 residues long: Iron-sulfur cluster insertion protein ErpA (117 aa).

Residues C45, C109, and C111 each contribute to the iron-sulfur cluster site.

Belongs to the HesB/IscA family. In terms of assembly, homodimer. Iron-sulfur cluster is required as a cofactor.

Its function is as follows. Required for insertion of 4Fe-4S clusters for at least IspG. This chain is Iron-sulfur cluster insertion protein ErpA, found in Saccharophagus degradans (strain 2-40 / ATCC 43961 / DSM 17024).